Here is a 345-residue protein sequence, read N- to C-terminus: MKITELNYTLPTDLIAQKPLSERDKSRLLVLHKNTGEIEHRIFYEIVEYLNEGDILIINNTKVIPARLIAEKPSGGKIEILLIKEKKCSSQNVVWEVMTKGSYEGEVFIDEFIAELRNNCDGRYIVFKNMTSPKVRNLINEKGFMPLPPYIKRKPIQSDRQDYQTVYAKMNGSIAAPTAGLHFTKELLETIISKGVKLREITLHVGVGTFKPIKVDKLQEHKMDPEYFEIDKTLIEEIYAIKKAGKRIFSVGTTTTRALEGYASGKYEDRGSDNYKIKGSTDIFIYPEFSFKIVDALITNFHLPKSTPLAMVYAFCEMQKVKKAYREAIEKGYRFFSYGDAMLII.

This sequence belongs to the QueA family. As to quaternary structure, monomer.

Its subcellular location is the cytoplasm. It catalyses the reaction 7-aminomethyl-7-carbaguanosine(34) in tRNA + S-adenosyl-L-methionine = epoxyqueuosine(34) in tRNA + adenine + L-methionine + 2 H(+). Its pathway is tRNA modification; tRNA-queuosine biosynthesis. In terms of biological role, transfers and isomerizes the ribose moiety from AdoMet to the 7-aminomethyl group of 7-deazaguanine (preQ1-tRNA) to give epoxyqueuosine (oQ-tRNA). This chain is S-adenosylmethionine:tRNA ribosyltransferase-isomerase, found in Thermodesulfovibrio yellowstonii (strain ATCC 51303 / DSM 11347 / YP87).